A 637-amino-acid polypeptide reads, in one-letter code: Biosynthetic arginine decarboxylase (637 aa).

The residue at position 101 (lysine 101) is an N6-(pyridoxal phosphate)lysine. 286–296 contacts substrate; it reads FDVGGGLAVDY.

This sequence belongs to the Orn/Lys/Arg decarboxylase class-II family. SpeA subfamily. It depends on Mg(2+) as a cofactor. Requires pyridoxal 5'-phosphate as cofactor.

It carries out the reaction L-arginine + H(+) = agmatine + CO2. It functions in the pathway amine and polyamine biosynthesis; agmatine biosynthesis; agmatine from L-arginine: step 1/1. Catalyzes the biosynthesis of agmatine from arginine. The polypeptide is Biosynthetic arginine decarboxylase (Shewanella baltica (strain OS223)).